The sequence spans 395 residues: Tryptophan--tRNA ligase (395 aa).

ATP-binding positions include 8–10 (RPT) and 16–17 (GH). A 'HIGH' region motif is present at residues 9–17 (PTGKLHLGH). The insert stretch occupies residues 117 to 179 (RLTDLEKEFK…EIEPEILKRL (63 aa)). Asp-204 lines the L-tryptophan pocket. Residues 216-218 (GED), Ile-254, and 261-265 (KMSKS) each bind ATP. Positions 261-265 (KMSKS) match the 'KMSKS' region motif.

The protein belongs to the class-I aminoacyl-tRNA synthetase family. As to quaternary structure, homodimer.

Its subcellular location is the cytoplasm. It carries out the reaction tRNA(Trp) + L-tryptophan + ATP = L-tryptophyl-tRNA(Trp) + AMP + diphosphate + H(+). Functionally, catalyzes the attachment of tryptophan to tRNA(Trp). The sequence is that of Tryptophan--tRNA ligase from Aquifex aeolicus (strain VF5).